The following is a 256-amino-acid chain: 3-deoxy-manno-octulosonate cytidylyltransferase (256 aa).

Belongs to the KdsB family.

Its subcellular location is the cytoplasm. It catalyses the reaction 3-deoxy-alpha-D-manno-oct-2-ulosonate + CTP = CMP-3-deoxy-beta-D-manno-octulosonate + diphosphate. It participates in nucleotide-sugar biosynthesis; CMP-3-deoxy-D-manno-octulosonate biosynthesis; CMP-3-deoxy-D-manno-octulosonate from 3-deoxy-D-manno-octulosonate and CTP: step 1/1. The protein operates within bacterial outer membrane biogenesis; lipopolysaccharide biosynthesis. Functionally, activates KDO (a required 8-carbon sugar) for incorporation into bacterial lipopolysaccharide in Gram-negative bacteria. In Histophilus somni (strain 2336) (Haemophilus somnus), this protein is 3-deoxy-manno-octulosonate cytidylyltransferase.